The chain runs to 216 residues: CRIB domain-containing protein RIC7 (216 aa).

The CRIB domain occupies 36–49 (IGNPTDVKHVAHIG). Residues 52 to 216 (GPSDNATAPS…PQFEDDRNGF (165 aa)) are disordered. Residues 108 to 121 (SSSEKGSPTKERSD) are compositionally biased toward basic and acidic residues.

As to quaternary structure, interacts with ARAC4/ROP2 and ARAC11/ROP1. As to expression, expressed in roots, leaves, guard cells, stems, flowers, siliques and pollen.

It localises to the nucleus. Its subcellular location is the cytoplasm. The protein localises to the cell membrane. In terms of biological role, functions as a downstream effector of Rho-related GTP binding proteins of the 'Rho of Plants' (ROPs) family. Participates in the propagation of ROP GTPase signals in specific cellular responses. Functions as a downstream effector of active ARAC4/ROP2 GTPase which is involved in the prevention of excessive stomatal opening upon light stimulation. Is involved in pollen tube growth regulation through its interaction with ARAC11/ROP1. This is CRIB domain-containing protein RIC7 (RIC7) from Arabidopsis thaliana (Mouse-ear cress).